Consider the following 512-residue polypeptide: Hyaluronidase PH-20 (512 aa).

An N-terminal signal peptide occupies residues 1 to 35 (MGELQFKWLFWRSFAESGGTFQTVLIFLFIPYSLT). 2 disulfides stabilise this stretch: C60–C351 and C223–C237. A glycan (N-linked (GlcNAc...) asparagine) is linked at N63. E147 functions as the Proton donor in the catalytic mechanism. 2 N-linked (GlcNAc...) asparagine glycosylation sites follow: N165 and N179. N-linked (GlcNAc...) asparagine glycosylation occurs at N368. Intrachain disulfides connect C376–C387, C381–C435, and C437–C464. An N-linked (GlcNAc...) asparagine glycan is attached at N408.

Belongs to the glycosyl hydrolase 56 family.

The protein localises to the cell membrane. It catalyses the reaction Random hydrolysis of (1-&gt;4)-linkages between N-acetyl-beta-D-glucosamine and D-glucuronate residues in hyaluronate.. Involved in sperm-egg adhesion. Upon fertilization sperm must first penetrate a layer of cumulus cells that surrounds the egg before reaching the zona pellucida. The cumulus cells are embedded in a matrix containing hyaluronic acid which is formed prior to ovulation. This protein aids in penetrating the layer of cumulus cells by digesting hyaluronic acid. In Rattus norvegicus (Rat), this protein is Hyaluronidase PH-20 (Spam1).